Consider the following 393-residue polypeptide: Acetyl-CoA acetyltransferase (393 aa).

Cys88 (acyl-thioester intermediate) is an active-site residue. Catalysis depends on proton acceptor residues His349 and Cys379.

The protein belongs to the thiolase-like superfamily. Thiolase family. As to quaternary structure, homotetramer.

It is found in the cytoplasm. The enzyme catalyses 2 acetyl-CoA = acetoacetyl-CoA + CoA. It functions in the pathway biopolymer metabolism; poly-(R)-3-hydroxybutanoate biosynthesis. The condensation reaction is inhibited by free CoA. The cleavage reaction is characterized by substrate inhibition by acetoacetyl-CoA, which is partially relieved by free CoA. Functionally, catalyzes the condensation of two acetyl-coA units to form acetoacetyl-CoA. Is involved in the biosynthesis of polyhydroxybutyrate (PHB), which is accumulated as an intracellular energy reserve material when cells grow under conditions of nutrient limitation. Also catalyzes the reverse reaction, i.e. the cleavage of acetoacetyl-CoA, and is therefore also involved in the reutilization of PHB. This is Acetyl-CoA acetyltransferase from Cupriavidus necator (strain ATCC 17699 / DSM 428 / KCTC 22496 / NCIMB 10442 / H16 / Stanier 337) (Ralstonia eutropha).